The sequence spans 315 residues: Probable cell division protein WhiA (315 aa).

The segment at residues 274–308 (SLKNLGELIPGGPISKSGINHRLRKLNEIAEKIRA) is a DNA-binding region (H-T-H motif).

This sequence belongs to the WhiA family.

Its function is as follows. Involved in cell division and chromosome segregation. This is Probable cell division protein WhiA from Ligilactobacillus salivarius (strain UCC118) (Lactobacillus salivarius).